The following is a 130-amino-acid chain: Small ribosomal subunit protein uS9 (130 aa).

Belongs to the universal ribosomal protein uS9 family.

In Streptococcus mutans serotype c (strain ATCC 700610 / UA159), this protein is Small ribosomal subunit protein uS9.